A 227-amino-acid chain; its full sequence is Cytidylate kinase (227 aa).

12–20 is an ATP binding site; it reads GPSGVGKGT.

Belongs to the cytidylate kinase family. Type 1 subfamily.

The protein localises to the cytoplasm. It catalyses the reaction CMP + ATP = CDP + ADP. The enzyme catalyses dCMP + ATP = dCDP + ADP. This Shewanella denitrificans (strain OS217 / ATCC BAA-1090 / DSM 15013) protein is Cytidylate kinase.